We begin with the raw amino-acid sequence, 196 residues long: Holliday junction branch migration complex subunit RuvA (196 aa).

The domain I stretch occupies residues M1–I63. Residues D64 to I142 are domain II. The flexible linker stretch occupies residues I143–I146. The segment at I146–L196 is domain III.

The protein belongs to the RuvA family. In terms of assembly, homotetramer. Forms an RuvA(8)-RuvB(12)-Holliday junction (HJ) complex. HJ DNA is sandwiched between 2 RuvA tetramers; dsDNA enters through RuvA and exits via RuvB. An RuvB hexamer assembles on each DNA strand where it exits the tetramer. Each RuvB hexamer is contacted by two RuvA subunits (via domain III) on 2 adjacent RuvB subunits; this complex drives branch migration. In the full resolvosome a probable DNA-RuvA(4)-RuvB(12)-RuvC(2) complex forms which resolves the HJ.

It localises to the cytoplasm. In terms of biological role, the RuvA-RuvB-RuvC complex processes Holliday junction (HJ) DNA during genetic recombination and DNA repair, while the RuvA-RuvB complex plays an important role in the rescue of blocked DNA replication forks via replication fork reversal (RFR). RuvA specifically binds to HJ cruciform DNA, conferring on it an open structure. The RuvB hexamer acts as an ATP-dependent pump, pulling dsDNA into and through the RuvAB complex. HJ branch migration allows RuvC to scan DNA until it finds its consensus sequence, where it cleaves and resolves the cruciform DNA. The chain is Holliday junction branch migration complex subunit RuvA from Azobacteroides pseudotrichonymphae genomovar. CFP2.